A 409-amino-acid polypeptide reads, in one-letter code: Aspartate aminotransferase, cytoplasmic (409 aa).

Ser2 is subject to N-acetylserine. Residues Gly38, Trp138, and Asn191 each contribute to the L-aspartate site. Lys255 carries the post-translational modification N6-(pyridoxal phosphate)lysine. Arg383 contacts L-aspartate. At Ser385 the chain carries Phosphoserine.

The protein belongs to the class-I pyridoxal-phosphate-dependent aminotransferase family. In terms of assembly, homodimer. Requires pyridoxal 5'-phosphate as cofactor.

The protein resides in the cytoplasm. The enzyme catalyses L-aspartate + 2-oxoglutarate = oxaloacetate + L-glutamate. In terms of biological role, plays a key role in amino acid metabolism. The chain is Aspartate aminotransferase, cytoplasmic from Schizosaccharomyces pombe (strain 972 / ATCC 24843) (Fission yeast).